We begin with the raw amino-acid sequence, 98 residues long: Small ribosomal subunit protein bS6 (98 aa).

The protein belongs to the bacterial ribosomal protein bS6 family.

Functionally, binds together with bS18 to 16S ribosomal RNA. The protein is Small ribosomal subunit protein bS6 of Lactobacillus johnsonii (strain CNCM I-12250 / La1 / NCC 533).